The following is a 324-amino-acid chain: Probable pectinesterase A (324 aa).

The signal sequence occupies residues 1-19 (MHLPSLVLGLLGLGLTASA). N27 is a glycosylation site (N-linked (GlcNAc...) asparagine). Q142 contacts substrate. The active-site Proton donor is D165. D186 acts as the Nucleophile in catalysis. An N-linked (GlcNAc...) asparagine glycan is attached at N191. The substrate site is built by R246 and W248.

The protein belongs to the pectinesterase family.

It is found in the secreted. The enzyme catalyses [(1-&gt;4)-alpha-D-galacturonosyl methyl ester](n) + n H2O = [(1-&gt;4)-alpha-D-galacturonosyl](n) + n methanol + n H(+). Its pathway is glycan metabolism; pectin degradation; 2-dehydro-3-deoxy-D-gluconate from pectin: step 1/5. Functionally, involved in maceration and soft-rotting of plant tissue. The protein is Probable pectinesterase A (pmeA) of Neosartorya fischeri (strain ATCC 1020 / DSM 3700 / CBS 544.65 / FGSC A1164 / JCM 1740 / NRRL 181 / WB 181) (Aspergillus fischerianus).